Reading from the N-terminus, the 295-residue chain is Cell shape-determining protein MreC (295 aa).

An N-terminal signal peptide occupies residues 1 to 34 (MPQFFLNKRLIILLISIIVLVALVGFSLRDRENA). Residues 66-112 (VVDLKNTYTENQHLKERLEELAQLESEVADLKKENKDLKESLDITDS) are a coiled coil. Residues 276–295 (SAEAGTTDDDTTSSDTTGGQ) form a disordered region.

Belongs to the MreC family. As to quaternary structure, homooligomer of 24 subunits, arranged as 12 dimers.

Functionally, involved in formation and maintenance of cell shape. This is Cell shape-determining protein MreC from Listeria monocytogenes serovar 1/2a (strain ATCC BAA-679 / EGD-e).